Reading from the N-terminus, the 391-residue chain is Salivary protein TRIO (391 aa).

The signal sequence occupies residues 1–24 (MCRGLSAVLILLVSLSAQLHVVVG). N-linked (GlcNAc...) asparagine glycosylation is present at Asn323.

In terms of tissue distribution, female salivary gland (at protein level). Female saliva (at protein level). Not detected in female midgut, head and carcass (at protein level). Not detected in male tissues (at protein level).

It localises to the secreted. Functionally, required for efficient probing on a mammalian host. Alters the local inflammatory response in the host skin following a mosquito bite by suppressing TNF-alpha/TNF expression. In terms of biological role, (Microbial infection) Contributes to optimal transmission of Plasmodium berghei sporozoites to mice. (Microbial infection) Contributes to optimal transmission of Plasmodium falciparum sporozoites to mammalian host. This Anopheles gambiae (African malaria mosquito) protein is Salivary protein TRIO.